A 191-amino-acid chain; its full sequence is NADH-quinone oxidoreductase subunit B (191 aa).

Residues cysteine 52, cysteine 53, cysteine 118, and cysteine 148 each coordinate [4Fe-4S] cluster.

This sequence belongs to the complex I 20 kDa subunit family. NDH-1 is composed of 14 different subunits. Subunits NuoB, C, D, E, F, and G constitute the peripheral sector of the complex. [4Fe-4S] cluster is required as a cofactor.

It localises to the cell inner membrane. The catalysed reaction is a quinone + NADH + 5 H(+)(in) = a quinol + NAD(+) + 4 H(+)(out). Functionally, NDH-1 shuttles electrons from NADH, via FMN and iron-sulfur (Fe-S) centers, to quinones in the respiratory chain. The immediate electron acceptor for the enzyme in this species is believed to be a menaquinone. Couples the redox reaction to proton translocation (for every two electrons transferred, four hydrogen ions are translocated across the cytoplasmic membrane), and thus conserves the redox energy in a proton gradient. The polypeptide is NADH-quinone oxidoreductase subunit B (Azobacteroides pseudotrichonymphae genomovar. CFP2).